Reading from the N-terminus, the 795-residue chain is Lon protease 1 (795 aa).

The region spanning leucine 9 to leucine 204 is the Lon N-terminal domain. Glycine 360–threonine 367 contacts ATP. One can recognise a Lon proteolytic domain in the interval glutamate 596 to proline 777. Catalysis depends on residues serine 683 and lysine 726.

It belongs to the peptidase S16 family. As to quaternary structure, homohexamer. Organized in a ring with a central cavity.

It localises to the cytoplasm. The catalysed reaction is Hydrolysis of proteins in presence of ATP.. Functionally, ATP-dependent serine protease that mediates the selective degradation of mutant and abnormal proteins as well as certain short-lived regulatory proteins. Required for cellular homeostasis and for survival from DNA damage and developmental changes induced by stress. Degrades polypeptides processively to yield small peptide fragments that are 5 to 10 amino acids long. Binds to DNA in a double-stranded, site-specific manner. The chain is Lon protease 1 from Thermus thermophilus (strain ATCC BAA-163 / DSM 7039 / HB27).